The sequence spans 234 residues: UDP-2,3-diacylglucosamine hydrolase (234 aa).

Mn(2+)-binding residues include Asp9, His11, Asp42, Asn80, and His115. Asn80–Arg81 lines the substrate pocket. 5 residues coordinate substrate: Asp123, Ser161, Lys165, Lys168, and His196. Residues His196 and His198 each coordinate Mn(2+).

Belongs to the LpxH family. It depends on Mn(2+) as a cofactor.

It is found in the cell inner membrane. The enzyme catalyses UDP-2-N,3-O-bis[(3R)-3-hydroxytetradecanoyl]-alpha-D-glucosamine + H2O = 2-N,3-O-bis[(3R)-3-hydroxytetradecanoyl]-alpha-D-glucosaminyl 1-phosphate + UMP + 2 H(+). It participates in glycolipid biosynthesis; lipid IV(A) biosynthesis; lipid IV(A) from (3R)-3-hydroxytetradecanoyl-[acyl-carrier-protein] and UDP-N-acetyl-alpha-D-glucosamine: step 4/6. Its function is as follows. Hydrolyzes the pyrophosphate bond of UDP-2,3-diacylglucosamine to yield 2,3-diacylglucosamine 1-phosphate (lipid X) and UMP by catalyzing the attack of water at the alpha-P atom. Involved in the biosynthesis of lipid A, a phosphorylated glycolipid that anchors the lipopolysaccharide to the outer membrane of the cell. The sequence is that of UDP-2,3-diacylglucosamine hydrolase from Histophilus somni (strain 2336) (Haemophilus somnus).